The sequence spans 306 residues: MIRVEIYERLEAAAVAEVLELVEAGARADGLSALNEQTILNLRHGGAEAEPGAHLMIRDAEGTLVGYANLELDNDGVAAVEMLVHPTHRHNGHGEALLAALIKRATAAKCRALTIWAHGDHPTALLLADRHDFTRDRVLWQMRRHLTDADGDGEPAAGITIRSFVPGRDETRLLEVNNAAFADHPDQGGWTVRDIAMREREDWFDPEGLLLAERDVDGQVLGFHWTKVHGSGDSAIGEIYVLGVAPEAQGLKLGAALTTAGLRYLRGRGLDTVMLYVDESNVRAVRLYTGAGFTRWTTDVNYHKKL.

2 consecutive N-acetyltransferase domains span residues 5-157 and 159-306; these read EIYE…EPAA and ITIR…HKKL. A 1D-myo-inositol 2-(L-cysteinylamino)-2-deoxy-alpha-D-glucopyranoside-binding site is contributed by Glu36. Residue 82-84 participates in acetyl-CoA binding; it reads MLV. Positions 186, 227, and 238 each coordinate 1D-myo-inositol 2-(L-cysteinylamino)-2-deoxy-alpha-D-glucopyranoside. 242-244 contributes to the acetyl-CoA binding site; it reads LGV. Tyr276 lines the 1D-myo-inositol 2-(L-cysteinylamino)-2-deoxy-alpha-D-glucopyranoside pocket. Residue 281–286 participates in acetyl-CoA binding; sequence NVRAVR.

This sequence belongs to the acetyltransferase family. MshD subfamily. Monomer.

The catalysed reaction is 1D-myo-inositol 2-(L-cysteinylamino)-2-deoxy-alpha-D-glucopyranoside + acetyl-CoA = mycothiol + CoA + H(+). In terms of biological role, catalyzes the transfer of acetyl from acetyl-CoA to desacetylmycothiol (Cys-GlcN-Ins) to form mycothiol. This Stackebrandtia nassauensis (strain DSM 44728 / CIP 108903 / NRRL B-16338 / NBRC 102104 / LLR-40K-21) protein is Mycothiol acetyltransferase.